A 240-amino-acid chain; its full sequence is Dihydromonapterin reductase (240 aa).

Tyrosine 152 (proton acceptor) is an active-site residue.

It belongs to the short-chain dehydrogenases/reductases (SDR) family. FolM subfamily.

The catalysed reaction is (6S)-5,6,7,8-tetrahydrofolate + NADP(+) = 7,8-dihydrofolate + NADPH + H(+). It carries out the reaction 7,8-dihydromonapterin + NADPH + H(+) = 5,6,7,8-tetrahydromonapterin + NADP(+). Its function is as follows. Catalyzes the reduction of dihydromonapterin to tetrahydromonapterin. Also has lower activity with dihydrofolate. The chain is Dihydromonapterin reductase (folM) from Shigella flexneri serotype 5b (strain 8401).